A 183-amino-acid chain; its full sequence is Capsid protein (183 aa).

Positions 136-183 are disordered; sequence NAPILSTLPETTVVRQRGRAPRRRTPSPRRRRSQSPRRRRSQSPASQC. A compositionally biased stretch (basic residues) spans 151 to 176; the sequence is QRGRAPRRRTPSPRRRRSQSPRRRRS. A 1; half-length repeat occupies 155–161; the sequence is APRRRTP. The 3 X 8 AA repeats of S-P-R-R-R-[PR]-S-Q stretch occupies residues 155–177; it reads APRRRTPSPRRRRSQSPRRRRSQ. The Bipartite nuclear localization signal motif lies at 158 to 175; it reads RRTPSPRRRRSQSPRRRR. Serine 162 and serine 170 each carry phosphoserine; by host. 2 tandem repeats follow at residues 162–169 and 170–177. The RNA binding stretch occupies residues 177–183; sequence QSPASQC.

This sequence belongs to the orthohepadnavirus core antigen family. In terms of assembly, homodimerizes, then multimerizes. Interacts with cytosol exposed regions of viral L glycoprotein present in the reticulum-to-Golgi compartment. Interacts with human FLNB. Phosphorylated form interacts with host importin alpha; this interaction depends on the exposure of the NLS, which itself depends upon genome maturation and/or phosphorylation of the capsid protein. Interacts with host NUP153. Post-translationally, phosphorylated by host SRPK1, SRPK2, and maybe protein kinase C or GAPDH. Phosphorylation is critical for pregenomic RNA packaging. Protein kinase C phosphorylation is stimulated by HBx protein and may play a role in transport of the viral genome to the nucleus at the late step during the viral replication cycle.

The protein localises to the virion. Its subcellular location is the host cytoplasm. Its function is as follows. Self assembles to form an icosahedral capsid. Most capsids appear to be large particles with an icosahedral symmetry of T=4 and consist of 240 copies of capsid protein, though a fraction forms smaller T=3 particles consisting of 180 capsid proteins. Entering capsids are transported along microtubules to the nucleus. Phosphorylation of the capsid is thought to induce exposure of nuclear localization signal in the C-terminal portion of the capsid protein that allows binding to the nuclear pore complex via the importin (karyopherin-) alpha and beta. Capsids are imported in intact form through the nuclear pore into the nuclear basket, where it probably binds NUP153. Only capsids that contain the mature viral genome can release the viral DNA and capsid protein into the nucleoplasm. Immature capsids get stuck in the basket. Capsids encapsulate the pre-genomic RNA and the P protein. Pre-genomic RNA is reverse-transcribed into DNA while the capsid is still in the cytoplasm. The capsid can then either be directed to the nucleus, providing more genomes for transcription, or bud through the endoplasmic reticulum to provide new virions. This chain is Capsid protein, found in Homo sapiens (Human).